A 533-amino-acid polypeptide reads, in one-letter code: Beta-1,2-xylosyltransferase RCN11 (533 aa).

The Cytoplasmic portion of the chain corresponds to methionine 1–arginine 23. A helical; Signal-anchor for type II membrane protein membrane pass occupies residues isoleucine 24 to leucine 44. The Lumenal portion of the chain corresponds to leucine 45–cysteine 533. Positions histidine 51–aspartate 78 are disordered. The span at proline 56–valine 65 shows a compositional bias: basic and acidic residues. Residues asparagine 307 and asparagine 313 are each glycosylated (N-linked (GlcNAc...) asparagine).

It belongs to the glycosyltransferase 61 family. Expressed at the base of the crown roots and in the basal region of the shoot, which contains the shoot and axillary meristems.

It localises to the golgi apparatus membrane. Its pathway is glycan metabolism. Functionally, glycosyltransferase involved in the xylosylation of N-glycans. Possesses beta-1,2-xylosyltransferase activity, transferring xylose from UDP-xylose to the core beta-linked mannose of N-glycans. Beta-1,2-linked xylose residues on N-glycans are critical for seed germination and plant development and growth under conditions of abiotic stress. The chain is Beta-1,2-xylosyltransferase RCN11 from Oryza sativa subsp. japonica (Rice).